Consider the following 314-residue polypeptide: 4-hydroxy-3-methylbut-2-enyl diphosphate reductase (314 aa).

Cys-12 is a binding site for [4Fe-4S] cluster. Residues His-41 and His-74 each coordinate (2E)-4-hydroxy-3-methylbut-2-enyl diphosphate. Dimethylallyl diphosphate is bound by residues His-41 and His-74. His-41 and His-74 together coordinate isopentenyl diphosphate. [4Fe-4S] cluster is bound at residue Cys-96. Position 124 (His-124) interacts with (2E)-4-hydroxy-3-methylbut-2-enyl diphosphate. His-124 is a binding site for dimethylallyl diphosphate. His-124 contributes to the isopentenyl diphosphate binding site. Glu-126 serves as the catalytic Proton donor. Thr-168 is a (2E)-4-hydroxy-3-methylbut-2-enyl diphosphate binding site. Cys-198 contributes to the [4Fe-4S] cluster binding site. Ser-226, Ser-227, Asn-228, and Ser-270 together coordinate (2E)-4-hydroxy-3-methylbut-2-enyl diphosphate. Residues Ser-226, Ser-227, Asn-228, and Ser-270 each contribute to the dimethylallyl diphosphate site. Ser-226, Ser-227, Asn-228, and Ser-270 together coordinate isopentenyl diphosphate.

This sequence belongs to the IspH family. The cofactor is [4Fe-4S] cluster.

It catalyses the reaction isopentenyl diphosphate + 2 oxidized [2Fe-2S]-[ferredoxin] + H2O = (2E)-4-hydroxy-3-methylbut-2-enyl diphosphate + 2 reduced [2Fe-2S]-[ferredoxin] + 2 H(+). The catalysed reaction is dimethylallyl diphosphate + 2 oxidized [2Fe-2S]-[ferredoxin] + H2O = (2E)-4-hydroxy-3-methylbut-2-enyl diphosphate + 2 reduced [2Fe-2S]-[ferredoxin] + 2 H(+). Its pathway is isoprenoid biosynthesis; dimethylallyl diphosphate biosynthesis; dimethylallyl diphosphate from (2E)-4-hydroxy-3-methylbutenyl diphosphate: step 1/1. It participates in isoprenoid biosynthesis; isopentenyl diphosphate biosynthesis via DXP pathway; isopentenyl diphosphate from 1-deoxy-D-xylulose 5-phosphate: step 6/6. Catalyzes the conversion of 1-hydroxy-2-methyl-2-(E)-butenyl 4-diphosphate (HMBPP) into a mixture of isopentenyl diphosphate (IPP) and dimethylallyl diphosphate (DMAPP). Acts in the terminal step of the DOXP/MEP pathway for isoprenoid precursor biosynthesis. The sequence is that of 4-hydroxy-3-methylbut-2-enyl diphosphate reductase from Pseudomonas aeruginosa (strain ATCC 15692 / DSM 22644 / CIP 104116 / JCM 14847 / LMG 12228 / 1C / PRS 101 / PAO1).